The sequence spans 599 residues: UPF0313 protein UNCMA_01890 (599 aa).

One can recognise a Radical SAM core domain in the interval 281–557 (EDIPALRTVR…RALLQYKNPE (277 aa)). Residues C299, C303, and C306 each contribute to the [4Fe-4S] cluster site.

Belongs to the UPF0313 family. [4Fe-4S] cluster serves as cofactor.

In Methanocella arvoryzae (strain DSM 22066 / NBRC 105507 / MRE50), this protein is UPF0313 protein UNCMA_01890.